The chain runs to 427 residues: Type II methyltransferase M1.BsuMI (427 aa).

One can recognise an SAM-dependent MTase C5-type domain in the interval 84-427 (INIADLFSGC…SYLLALHQLR (344 aa)). The active site involves Cys176.

This sequence belongs to the class I-like SAM-binding methyltransferase superfamily. C5-methyltransferase family. In terms of assembly, monomer. May form a complex with YdiP, also seems to be active alone.

It catalyses the reaction a 2'-deoxycytidine in DNA + S-adenosyl-L-methionine = a 5-methyl-2'-deoxycytidine in DNA + S-adenosyl-L-homocysteine + H(+). With respect to regulation, somewhat inhibited by MgCl(2) and spermidine, strongly inhibited by MnCl(2). Functionally, a methylase, recognizes the double-stranded sequence 5'-YTCGAR-3', methylates C-3 on both strands, and protects the DNA from cleavage by the BsuMI endonuclease. The sequence is that of Type II methyltransferase M1.BsuMI (ydiO) from Bacillus subtilis (strain 168).